Reading from the N-terminus, the 380-residue chain is Alpha-N-acetylneuraminate alpha-2,8-sialyltransferase ST8SIA3 (380 aa).

Residues M1–V9 lie on the Cytoplasmic side of the membrane. Residues A10 to L33 form a helical; Signal-anchor for type II membrane protein membrane-spanning segment. Over K34 to A380 the chain is Lumenal. Residues N93 and N113 are each glycosylated (N-linked (GlcNAc...) asparagine). Disulfide bonds link C162–C313 and C176–C379. Residues N167 and N190 each contribute to the CMP-N-acetyl-beta-neuraminate site. N-linked (GlcNAc...) asparagine glycosylation is present at N206. CMP-N-acetyl-beta-neuraminate is bound by residues S300, T301, G302, W322, Y336, and H337. H354 serves as the catalytic Proton donor/acceptor.

The protein belongs to the glycosyltransferase 29 family. As to quaternary structure, homodimer. Post-translationally, autopolysialylated.

It is found in the golgi apparatus membrane. It carries out the reaction [N-acetyl-alpha-D-neuraminosyl-(2-&gt;8)](n) + CMP-N-acetyl-beta-neuraminate = [N-acetyl-alpha-D-neuraminosyl-(2-&gt;8)](n+1) + CMP + H(+). It catalyses the reaction alpha-Neu5Ac-(2-&gt;3)-beta-D-Gal-(1-&gt;4)-6S-D-GlcNAc + CMP-N-acetyl-beta-neuraminate = alpha-Neu5Ac-(2-&gt;8)-alpha-Neu5Ac-(2-&gt;3)-beta-D-Gal-(1-&gt;4)-6S-D-GlcNAc + CMP + H(+). The catalysed reaction is a ganglioside GM3 (d18:1(4E)) + CMP-N-acetyl-beta-neuraminate = a ganglioside GD3 (d18:1(4E)) + CMP + H(+). The enzyme catalyses a ganglioside GM3 + CMP-N-acetyl-beta-neuraminate = a ganglioside GD3 + CMP + H(+). It carries out the reaction an N-acetyl-alpha-neuraminyl-(2-&gt;3)-beta-D-galactosyl derivative + CMP-N-acetyl-beta-neuraminate = an N-acetyl-alpha-neuraminyl-(2-&gt;8)-N-acetyl-alpha-neuraminyl-(2-&gt;3)-beta-D-galactosyl derivative + CMP + H(+). It catalyses the reaction an N-acetyl-alpha-neuraminyl-(2-&gt;3)-beta-D-galactosyl-(1-&gt;4)-N-acetyl-beta-D-glucosaminyl derivative + CMP-N-acetyl-beta-neuraminate = an alpha-Neu5Ac-(2-&gt;8)-alpha-Neu5Ac-(2-&gt;3)-beta-D-Gal-(1-&gt;4)-beta-D-GlcNAc derivative + CMP + H(+). It participates in protein modification; protein glycosylation. Its function is as follows. Catalyzes the transfer of sialic acid from a CMP-linked sialic acid donor onto a terminal alpha-2,3-, alpha-2,6-, or alpha-2,8-linked sialic acid of an acceptor, such as N-linked oligosaccharides of glycoproteins and glycolipids through alpha-2,8-linkages. Forms oligosialic and polysialic acid on various sialylated N-acetyllactosamine oligosaccharides of glycoproteins, including FETUB N-glycans, a2-HS-glycoprotein (AHSG) and alpha 2,3-sialylated glycosphingolipids, such as alpha 2,3-sialylparagloboside and ganglioside GM3 and to a lesser extent NCAM1 N-glycans. However, it is much more specific to N-linked oligosaccharides of glycoproteins than glycosphingolipids. 2,3-sialylparagloboside serves as the best acceptor substrate among the glycolipids. alpha-Neu5Ac-(2-&gt;8)-alpha-Neu5Ac-(2-&gt;3)-beta-D-Gal-(1-&gt;4)-6S-D-GlcNAc and monosialyl and disialyl N-acetyllactosamines are the best acceptor substrates among glycoproteins. May plays critical role in the striatum by mediating the formation of disialylated and trisialylated terminal glycotopes on N- and O-glycans of specific striatal proteins, regulating their distribution in lipid rafts, affecting their interaction with other binding partners, and subsequently modulating striatal functions. The sequence is that of Alpha-N-acetylneuraminate alpha-2,8-sialyltransferase ST8SIA3 from Pan troglodytes (Chimpanzee).